A 248-amino-acid polypeptide reads, in one-letter code: tRNA (guanine-N(7)-)-methyltransferase (248 aa).

The S-adenosyl-L-methionine site is built by Glu80, Glu105, Asp132, and Asp155. Asp155 is a catalytic residue. Residues Lys159, Asp191, and 223 to 226 (TKFE) contribute to the substrate site.

This sequence belongs to the class I-like SAM-binding methyltransferase superfamily. TrmB family.

It catalyses the reaction guanosine(46) in tRNA + S-adenosyl-L-methionine = N(7)-methylguanosine(46) in tRNA + S-adenosyl-L-homocysteine. It participates in tRNA modification; N(7)-methylguanine-tRNA biosynthesis. Functionally, catalyzes the formation of N(7)-methylguanine at position 46 (m7G46) in tRNA. This is tRNA (guanine-N(7)-)-methyltransferase from Nocardioides sp. (strain ATCC BAA-499 / JS614).